A 215-amino-acid polypeptide reads, in one-letter code: Protein ERP2 (215 aa).

The N-terminal stretch at 1-25 (MIKSTIALPSFFIVLILALVNSVAA) is a signal peptide. Over 26–182 (SSSYAPVAIS…TVNSTESRLT (157 aa)) the chain is Lumenal. In terms of domain architecture, GOLD spans 41 to 123 (KECLYYDMVT…LKKVEITLEK (83 aa)). A helical transmembrane segment spans residues 183 to 203 (WLSILIIIIIAVISIAQVLLI). Residues 204 to 215 (QFLFTGRQKNYV) are Cytoplasmic-facing.

It belongs to the EMP24/GP25L family. As to quaternary structure, associates with EMP24, ERV25 and ERP1.

Its subcellular location is the endoplasmic reticulum membrane. Its function is as follows. Involved in vesicular protein trafficking. This chain is Protein ERP2 (ERP2), found in Saccharomyces cerevisiae (strain ATCC 204508 / S288c) (Baker's yeast).